The primary structure comprises 201 residues: Lipopolysaccharide core heptose(II)-phosphate phosphatase (201 aa).

Positions 1–35 (MLAFTLRFIKNKRYLATLAGALVIIAGLTSQHAWS) are cleaved as a signal peptide.

This sequence belongs to the phosphoglycerate mutase family. Ais subfamily.

The protein resides in the periplasm. It participates in bacterial outer membrane biogenesis; lipopolysaccharide metabolism. In terms of biological role, catalyzes the dephosphorylation of heptose(II) of the outer membrane lipopolysaccharide core. This is Lipopolysaccharide core heptose(II)-phosphate phosphatase from Salmonella heidelberg (strain SL476).